The primary structure comprises 351 residues: Spermidine/putrescine import ATP-binding protein PotA (351 aa).

One can recognise an ABC transporter domain in the interval 6–236 (LELRNVTKEY…PENAWVANFI (231 aa)). 38-45 (GPSGCGKT) contacts ATP.

This sequence belongs to the ABC transporter superfamily. Spermidine/putrescine importer (TC 3.A.1.11.1) family. As to quaternary structure, the complex is composed of two ATP-binding proteins (PotA), two transmembrane proteins (PotB and PotC) and a solute-binding protein (PotD).

It localises to the cell membrane. The catalysed reaction is ATP + H2O + polyamine-[polyamine-binding protein]Side 1 = ADP + phosphate + polyamineSide 2 + [polyamine-binding protein]Side 1.. Part of the ABC transporter complex PotABCD involved in spermidine/putrescine import. Responsible for energy coupling to the transport system. The sequence is that of Spermidine/putrescine import ATP-binding protein PotA from Mycoplasma capricolum subsp. capricolum (strain California kid / ATCC 27343 / NCTC 10154).